A 767-amino-acid chain; its full sequence is Protein ROLLING AND ERECT LEAF 2 (767 aa).

Disordered stretches follow at residues 1–20 (MGCT…CKER), 78–187 (PALA…SEFF), and 201–309 (RELE…SSTV). Composition is skewed to pro residues over residues 81 to 90 (APTPTPPPPS) and 110 to 126 (APPP…PPPV). Residues 145–155 (SDSSVASPARS) show a composition bias toward low complexity. Residues 201–210 (RELEEEEKAR) are compositionally biased toward basic and acidic residues. Acidic residues predominate over residues 221–232 (EDEVDDDDDERE). Residues 255–264 (TRSEEGEMGN) are compositionally biased toward basic and acidic residues.

In terms of tissue distribution, highly expressed in young leaves and panicles. Expressed at low levels in roots.

Its subcellular location is the cell membrane. Its function is as follows. Involved in the regulation of leaf shape formation. May function by coordinating the expression of genes associated with leaf and bulliform cell development. This Oryza sativa subsp. japonica (Rice) protein is Protein ROLLING AND ERECT LEAF 2.